Here is a 950-residue protein sequence, read N- to C-terminus: MAQVAVSTPPIAHEESSESRMVVTFLVSALESMCKELAKSKAEVACIAMYEADVFVIGTEKGRAFVNARTDLQKDFAKYCVAEGLQEVKPPGPANASRMQVDSGETEILRKAVEDYFCFCYGKALGTAAMVPVPYEKMLTDQEAIVVQGLPEGVPFQHPENYDLATLKWILENKAGISFLINRPFPGPANQPGGPGVVTDTDKSVTSPSESCTPIRVKTEPMEDSGISLKAEVVSVKKESEDPNYYEYSMQESRHSSAGTEVIETELPMEDSIQLVPSETSEDPEAEVKIEGNTSSPNITNSAAGVEDLNIVQVTVPDNEKERLSSLEKIKQLREQVNDLFSRKFGEAIGVDFPVKVPYRKITFNPGCVVIDGMPPGVVFKAPGYLEISSMRRILDAADLIKFTVIRPLPGLELSNVGKRKIDQEGRVFQEKWERAYFFVEVQNIPTCLICKQSMSVSKEYNLRRHYQTNHSKHYDQYTEKMRDEKLQELKEGLRKYLLGSSDTVCPEQKQVFAKVNPRENAAVQPVEDVAGNLWEKLREKIRSFVAYSIAIDEITDINNTTQLAIFIRGVDENFDVSEELLDTVPMTGTKSGNEIFLRVEKSLKKFNIDWSKLVSVASTGTPAMVDANDGLVTKLKSKVAMVCKGSDLKSVCCIIHPESLCAQKLKMDHIMSVVVNAVNWICSRGLNHSEFTTLLYELDCQYGSLLYYTEIKWLSRGLVLKRFFESLEEIDSFMSSRGKPLPQLSSQDWIKDLAFLVDMTMHLNTLNISLQGHSQIVTQMYDLIRAFLAKLCLWETHLARNNLAHFPTLKSVSRNESDGLNYIPKIVELKTEFQKRLSDFKLYESELTLFSSPFSMKIESVQEALQMEVIDLQCNTVLKTKYDKVGIPEFYKHLWGSYPKYKIHCAKILSMFGSTYICEQLFSIMKLSKTEYCSQLKDSQWDSVLHIST.

GTF2I-like repeat units follow at residues 100-194 (QVDS…QPGG) and 324-418 (LSSL…SNVG).

Belongs to the TFII-I family.

It localises to the nucleus. This is General transcription factor II-I repeat domain-containing protein 2 (GTF2IRD2) from Bos taurus (Bovine).